A 405-amino-acid polypeptide reads, in one-letter code: L-carnitine CoA-transferase (405 aa).

Lys97 and Arg104 together coordinate CoA. Asp169 functions as the Nucleophile in the catalytic mechanism.

This sequence belongs to the CoA-transferase III family. CaiB subfamily. Homodimer.

The protein resides in the cytoplasm. It catalyses the reaction crotonobetainyl-CoA + (R)-carnitine = crotonobetaine + (R)-carnitinyl-CoA. The enzyme catalyses 4-(trimethylamino)butanoyl-CoA + (R)-carnitine = (R)-carnitinyl-CoA + 4-(trimethylamino)butanoate. Its pathway is amine and polyamine metabolism; carnitine metabolism. In terms of biological role, catalyzes the reversible transfer of the CoA moiety from gamma-butyrobetainyl-CoA to L-carnitine to generate L-carnitinyl-CoA and gamma-butyrobetaine. Is also able to catalyze the reversible transfer of the CoA moiety from gamma-butyrobetainyl-CoA or L-carnitinyl-CoA to crotonobetaine to generate crotonobetainyl-CoA. The chain is L-carnitine CoA-transferase from Escherichia coli O17:K52:H18 (strain UMN026 / ExPEC).